A 553-amino-acid polypeptide reads, in one-letter code: Rhodopsin kinase GRK7 (553 aa).

A Phosphoserine; by PKA modification is found at serine 36. Residues 56 to 176 (FNSLCEQQPI…LVSPFYDKFL (121 aa)) form the RGS domain. The Protein kinase domain occupies 191–454 (FEEFRVLGKG…SDDPRKHHFF (264 aa)). Residues 197 to 205 (LGKGGFGEV) and lysine 220 each bind ATP. Residue aspartate 316 is the Proton acceptor of the active site. Positions 455 to 520 (KTINFPRLEA…GAVPIAWQEE (66 aa)) constitute an AGC-kinase C-terminal domain. Residue cysteine 550 is modified to Cysteine methyl ester. Residue cysteine 550 is the site of S-geranylgeranyl cysteine attachment. Positions 551-553 (LLL) are cleaved as a propeptide — removed in mature form.

Belongs to the protein kinase superfamily. AGC Ser/Thr protein kinase family. GPRK subfamily. As to quaternary structure, interacts (when prenylated) with PDE6D; this promotes release from membranes. In terms of processing, autophosphorylated in vitro at Ser-490. Phosphorylation at Ser-36 is regulated by light and activated by cAMP.

The protein localises to the membrane. It carries out the reaction L-threonyl-[rhodopsin] + ATP = O-phospho-L-threonyl-[rhodopsin] + ADP + H(+). The enzyme catalyses L-seryl-[rhodopsin] + ATP = O-phospho-L-seryl-[rhodopsin] + ADP + H(+). Its activity is regulated as follows. Inhibited by phosphorylation of Ser-36. Retina-specific kinase involved in the shutoff of the photoresponse and adaptation to changing light conditions via cone opsin phosphorylation, including rhodopsin (RHO). The sequence is that of Rhodopsin kinase GRK7 (GRK7) from Sus scrofa (Pig).